The following is a 565-amino-acid chain: Adenine deaminase (565 aa).

Belongs to the metallo-dependent hydrolases superfamily. Adenine deaminase family. Mn(2+) serves as cofactor.

It catalyses the reaction adenine + H2O + H(+) = hypoxanthine + NH4(+). This is Adenine deaminase from Cereibacter sphaeroides (strain ATCC 17023 / DSM 158 / JCM 6121 / CCUG 31486 / LMG 2827 / NBRC 12203 / NCIMB 8253 / ATH 2.4.1.) (Rhodobacter sphaeroides).